The chain runs to 227 residues: Cytochrome c oxidase subunit 2 (227 aa).

Topologically, residues 1-14 (MAYPFQLGFQDATS) are mitochondrial intermembrane. The helical transmembrane segment at 15–45 (PIMEELLHFHDHTLMIVFLISSLVLYIISLM) threads the bilayer. At 46–59 (LTTKLTHTSTMDAQ) the chain is on the mitochondrial matrix side. Residues 60-87 (EVETIWTILPAIILILIALPSLRILYMM) traverse the membrane as a helical segment. Over 88-227 (DEINNPSLTV…HFEKWSASML (140 aa)) the chain is Mitochondrial intermembrane. 6 residues coordinate Cu cation: His161, Cys196, Glu198, Cys200, His204, and Met207. Glu198 contacts Mg(2+).

Belongs to the cytochrome c oxidase subunit 2 family. As to quaternary structure, component of the cytochrome c oxidase (complex IV, CIV), a multisubunit enzyme composed of 14 subunits. The complex is composed of a catalytic core of 3 subunits MT-CO1, MT-CO2 and MT-CO3, encoded in the mitochondrial DNA, and 11 supernumerary subunits COX4I, COX5A, COX5B, COX6A, COX6B, COX6C, COX7A, COX7B, COX7C, COX8 and NDUFA4, which are encoded in the nuclear genome. The complex exists as a monomer or a dimer and forms supercomplexes (SCs) in the inner mitochondrial membrane with NADH-ubiquinone oxidoreductase (complex I, CI) and ubiquinol-cytochrome c oxidoreductase (cytochrome b-c1 complex, complex III, CIII), resulting in different assemblies (supercomplex SCI(1)III(2)IV(1) and megacomplex MCI(2)III(2)IV(2)). Found in a complex with TMEM177, COA6, COX18, COX20, SCO1 and SCO2. Interacts with TMEM177 in a COX20-dependent manner. Interacts with COX20. Interacts with COX16. The cofactor is Cu cation.

It is found in the mitochondrion inner membrane. The catalysed reaction is 4 Fe(II)-[cytochrome c] + O2 + 8 H(+)(in) = 4 Fe(III)-[cytochrome c] + 2 H2O + 4 H(+)(out). Its function is as follows. Component of the cytochrome c oxidase, the last enzyme in the mitochondrial electron transport chain which drives oxidative phosphorylation. The respiratory chain contains 3 multisubunit complexes succinate dehydrogenase (complex II, CII), ubiquinol-cytochrome c oxidoreductase (cytochrome b-c1 complex, complex III, CIII) and cytochrome c oxidase (complex IV, CIV), that cooperate to transfer electrons derived from NADH and succinate to molecular oxygen, creating an electrochemical gradient over the inner membrane that drives transmembrane transport and the ATP synthase. Cytochrome c oxidase is the component of the respiratory chain that catalyzes the reduction of oxygen to water. Electrons originating from reduced cytochrome c in the intermembrane space (IMS) are transferred via the dinuclear copper A center (CU(A)) of subunit 2 and heme A of subunit 1 to the active site in subunit 1, a binuclear center (BNC) formed by heme A3 and copper B (CU(B)). The BNC reduces molecular oxygen to 2 water molecules using 4 electrons from cytochrome c in the IMS and 4 protons from the mitochondrial matrix. This chain is Cytochrome c oxidase subunit 2 (MT-CO2), found in Ceratotherium simum (White rhinoceros).